Here is a 311-residue protein sequence, read N- to C-terminus: Probable cell division protein WhiA (311 aa).

Positions 277 to 311 (TLKEVADQIPDGPISKSGVNHRFKKLHEIAESLRE) form a DNA-binding region, H-T-H motif.

The protein belongs to the WhiA family.

Functionally, involved in cell division and chromosome segregation. This is Probable cell division protein WhiA from Lactobacillus acidophilus (strain ATCC 700396 / NCK56 / N2 / NCFM).